Here is a 652-residue protein sequence, read N- to C-terminus: ATP-dependent zinc metalloprotease FtsH 2 (652 aa).

Topologically, residues 1-6 (MNKYRR) are cytoplasmic. The chain crosses the membrane as a helical span at residues 7-27 (GLALGALALAVFILIGVGISM). The Extracellular segment spans residues 28-108 (RATPQPVNLT…PAGNGAISAD (81 aa)). A helical transmembrane segment spans residues 109–129 (LMLLLRILTIVAVGVVIFVLF). Topologically, residues 130–652 (RRFGPSSIGT…RAAKPQIDRT (523 aa)) are cytoplasmic. 200 to 207 (GPPGTGKT) contributes to the ATP binding site. Residue His420 coordinates Zn(2+). Residue Glu421 is part of the active site. 2 residues coordinate Zn(2+): His424 and Asp496.

The protein in the central section; belongs to the AAA ATPase family. In the C-terminal section; belongs to the peptidase M41 family. Homohexamer. The cofactor is Zn(2+).

It is found in the cell membrane. Its function is as follows. Acts as a processive, ATP-dependent zinc metallopeptidase for both cytoplasmic and membrane proteins. Plays a role in the quality control of integral membrane proteins. This chain is ATP-dependent zinc metalloprotease FtsH 2, found in Sphaerobacter thermophilus (strain ATCC 49802 / DSM 20745 / KCCM 41009 / NCIMB 13125 / S 6022).